Consider the following 505-residue polypeptide: MSPWSWFLLQTLCLLPTGAASRRGAPGTANCELKPQQSELNSFLWTIKRDPPSYFFGTIHVPYTRVWDFIPDNSKEAFLQSSIVYFELDLTDPYTISALTSCQMLPQGENLQDVLPRDIYCRLKRHLEYVKLMMPLWMTPDQRGKGLYADYLFNAIAGNWERKRPVWVMLMVNSLTEVDIKSRGVPVLDLFLAQEAERLRKQTGAVEKVEEQCHPLNGLNFSQVIFALNQTLLQQESLRAGSLQIPYTTEDLIKHYNCGDLSSVILSHDSSQVPNFINATLPPQERITAQEIDSYLRRELIYKRNERIGKRVKALLEEFPDKGFFFAFGAGHFMGNNTVLDVLRREGYEVEHAPAGRPIHKGKSKKTSTRPTLSTIFAPKVPTLEVPAPEAVSSGHSTLPPLVSRPGSADTPSEAEQRFRKKRRRSQRRPRLRQFSDLWVRLEESDIVPQLQVPVLDRHISTELRLPRRGHSHHSQMVASSACLSLWTPVFWVLVLAFQTETPLL.

An N-terminal signal peptide occupies residues 1–19 (MSPWSWFLLQTLCLLPTGA). The Extracellular portion of the chain corresponds to 20-477 (ASRRGAPGTA…RRGHSHHSQM (458 aa)). N-linked (GlcNAc...) asparagine glycosylation is found at N220, N229, N278, and N336. Residues 389-428 (PEAVSSGHSTLPPLVSRPGSADTPSEAEQRFRKKRRRSQR) are disordered. Residues 419–428 (FRKKRRRSQR) are compositionally biased toward basic residues. Residues 478–498 (VASSACLSLWTPVFWVLVLAF) traverse the membrane as a helical segment. Over 499-505 (QTETPLL) the chain is Cytoplasmic.

The protein belongs to the TIKI family. Requires Mn(2+) as cofactor. It depends on Co(2+) as a cofactor.

Its subcellular location is the cell membrane. Metalloprotease that acts as a negative regulator of the Wnt signaling pathway by mediating the cleavage of the 8 N-terminal residues of a subset of Wnt proteins. Following cleavage, Wnt proteins become oxidized and form large disulfide-bond oligomers, leading to their inactivation. Able to cleave WNT3A, WNT5, but not WNT11. Required for head formation. The polypeptide is Metalloprotease TIKI1 (TRABD2A) (Homo sapiens (Human)).